The chain runs to 146 residues: uncharacterized protein (146 aa).

It belongs to the BlaI transcriptional regulatory family.

This is an uncharacterized protein from Latilactobacillus sakei (Lactobacillus sakei).